A 52-amino-acid polypeptide reads, in one-letter code: Conotoxin Cal9.2c (52 aa).

Residues 1-6 constitute a propeptide that is removed on maturation; the sequence is KKGVTL. Disulfide bonds link cysteine 14-cysteine 31, cysteine 19-cysteine 41, and cysteine 21-cysteine 46.

In terms of tissue distribution, expressed by the venom duct.

The protein resides in the secreted. Probable neurotoxin with unknown target. Possibly targets ion channels. The polypeptide is Conotoxin Cal9.2c (Californiconus californicus (California cone)).